We begin with the raw amino-acid sequence, 125 residues long: Alpha-endosulfine (125 aa).

Basic and acidic residues predominate over residues 1 to 37; that stretch reads MSDKYIGDSHLEETGEEKQDSQEKEAVTPEKAEEQKL. The segment at 1 to 53 is disordered; it reads MSDKYIGDSHLEETGEEKQDSQEKEAVTPEKAEEQKLKAKYPNLGQKPGGSDF. The residue at position 28 (T28) is a Phosphothreonine; by CDK2. S67 is modified (phosphoserine; by GWL). Residues 81-108 form a disordered region; the sequence is QLPCAGPDKNLVTGDHIPTPQDLPQRKS. Phosphothreonine; by CDK2 is present on T99. At S109 the chain carries Phosphoserine; by PKA.

Belongs to the endosulfine family. Post-translationally, phosphorylation at Ser-67 by gwl during mitosis is essential for interaction with ppp2r2d (PR55-delta) and subsequent inactivation of PP2A.

It localises to the cytoplasm. Functionally, protein phosphatase inhibitor that specifically inhibits protein phosphatase 2A (PP2A) during mitosis. When phosphorylated at Ser-67 during mitosis, specifically interacts with ppp2r2d (PR55-delta) and inhibits its activity, leading to inactivation of PP2A, an essential condition to keep cyclin-B1-CDK1 activity high during M phase. This is Alpha-endosulfine (ensa) from Xenopus tropicalis (Western clawed frog).